A 356-amino-acid chain; its full sequence is UDP-N-acetylglucosamine--N-acetylmuramyl-(pentapeptide) pyrophosphoryl-undecaprenol N-acetylglucosamine transferase (356 aa).

Residues 15 to 17, Asn127, Arg163, Ser191, Ile244, 263 to 268, and Gln288 each bind UDP-N-acetyl-alpha-D-glucosamine; these read TGG and ALTVSE.

It belongs to the glycosyltransferase 28 family. MurG subfamily.

Its subcellular location is the cell inner membrane. It carries out the reaction di-trans,octa-cis-undecaprenyl diphospho-N-acetyl-alpha-D-muramoyl-L-alanyl-D-glutamyl-meso-2,6-diaminopimeloyl-D-alanyl-D-alanine + UDP-N-acetyl-alpha-D-glucosamine = di-trans,octa-cis-undecaprenyl diphospho-[N-acetyl-alpha-D-glucosaminyl-(1-&gt;4)]-N-acetyl-alpha-D-muramoyl-L-alanyl-D-glutamyl-meso-2,6-diaminopimeloyl-D-alanyl-D-alanine + UDP + H(+). The protein operates within cell wall biogenesis; peptidoglycan biosynthesis. Functionally, cell wall formation. Catalyzes the transfer of a GlcNAc subunit on undecaprenyl-pyrophosphoryl-MurNAc-pentapeptide (lipid intermediate I) to form undecaprenyl-pyrophosphoryl-MurNAc-(pentapeptide)GlcNAc (lipid intermediate II). This chain is UDP-N-acetylglucosamine--N-acetylmuramyl-(pentapeptide) pyrophosphoryl-undecaprenol N-acetylglucosamine transferase, found in Klebsiella pneumoniae (strain 342).